Consider the following 440-residue polypeptide: Xylose isomerase (440 aa).

Residues H100 and D103 contribute to the active site. The Mg(2+) site is built by E231, E267, H270, D295, D306, D308, and D338.

This sequence belongs to the xylose isomerase family. As to quaternary structure, homotetramer. Mg(2+) serves as cofactor.

It is found in the cytoplasm. It catalyses the reaction alpha-D-xylose = alpha-D-xylulofuranose. The polypeptide is Xylose isomerase (Burkholderia thailandensis (strain ATCC 700388 / DSM 13276 / CCUG 48851 / CIP 106301 / E264)).